The following is a 264-amino-acid chain: 3-methyl-2-oxobutanoate hydroxymethyltransferase (264 aa).

Mg(2+) contacts are provided by D45 and D84. 3-methyl-2-oxobutanoate is bound by residues 45 to 46 (DS), D84, and K112. E114 provides a ligand contact to Mg(2+). E181 serves as the catalytic Proton acceptor.

The protein belongs to the PanB family. In terms of assembly, homodecamer; pentamer of dimers. Mg(2+) serves as cofactor.

It is found in the cytoplasm. It carries out the reaction 3-methyl-2-oxobutanoate + (6R)-5,10-methylene-5,6,7,8-tetrahydrofolate + H2O = 2-dehydropantoate + (6S)-5,6,7,8-tetrahydrofolate. It functions in the pathway cofactor biosynthesis; (R)-pantothenate biosynthesis; (R)-pantoate from 3-methyl-2-oxobutanoate: step 1/2. In terms of biological role, catalyzes the reversible reaction in which hydroxymethyl group from 5,10-methylenetetrahydrofolate is transferred onto alpha-ketoisovalerate to form ketopantoate. The sequence is that of 3-methyl-2-oxobutanoate hydroxymethyltransferase from Escherichia coli O157:H7.